Reading from the N-terminus, the 407-residue chain is uncharacterized protein (407 aa).

The disordered stretch occupies residues 145–231 (EANRFGRSNS…DPLTSITSDT (87 aa)). Over residues 158 to 175 (SNSRSKSSRSRSNNRSKS) the composition is skewed to basic residues. A compositionally biased stretch (low complexity) spans 176 to 196 (SRSSSTQSKSNNRSNSRSNSK). Residues 271–407 (IVFETLDQND…NHKIHMEKDI (137 aa)) form the N-acetyltransferase domain.

It localises to the virion. This is an uncharacterized protein from Acanthamoeba polyphaga (Amoeba).